Here is a 373-residue protein sequence, read N- to C-terminus: Probable tRNA sulfurtransferase (373 aa).

The THUMP domain maps to 54–158 (NKNIEELSKV…NDVAYFYHKI (105 aa)). Residues 176 to 177 (LF), 201 to 202 (NF), lysine 256, glycine 278, and glutamine 287 contribute to the ATP site.

This sequence belongs to the ThiI family.

The protein localises to the cytoplasm. The enzyme catalyses [ThiI sulfur-carrier protein]-S-sulfanyl-L-cysteine + a uridine in tRNA + 2 reduced [2Fe-2S]-[ferredoxin] + ATP + H(+) = [ThiI sulfur-carrier protein]-L-cysteine + a 4-thiouridine in tRNA + 2 oxidized [2Fe-2S]-[ferredoxin] + AMP + diphosphate. It catalyses the reaction [ThiS sulfur-carrier protein]-C-terminal Gly-Gly-AMP + S-sulfanyl-L-cysteinyl-[cysteine desulfurase] + AH2 = [ThiS sulfur-carrier protein]-C-terminal-Gly-aminoethanethioate + L-cysteinyl-[cysteine desulfurase] + A + AMP + 2 H(+). Its pathway is cofactor biosynthesis; thiamine diphosphate biosynthesis. Its function is as follows. Catalyzes the ATP-dependent transfer of a sulfur to tRNA to produce 4-thiouridine in position 8 of tRNAs, which functions as a near-UV photosensor. Also catalyzes the transfer of sulfur to the sulfur carrier protein ThiS, forming ThiS-thiocarboxylate. This is a step in the synthesis of thiazole, in the thiamine biosynthesis pathway. The sulfur is donated as persulfide by IscS. The sequence is that of Probable tRNA sulfurtransferase from Saccharolobus islandicus (strain M.14.25 / Kamchatka #1) (Sulfolobus islandicus).